The chain runs to 383 residues: MDFSLTEEQELLLASIRELITTNFPEEYFRTCDQNGTYPREFMRALADNGISMLGVPEEFGGIPADYVTQMLALMEVSKCGAPAFLITNGQCIHSMRRFGSAEQLRKTAESTLETGDPAYALALTEPGAGSDNNSATTTYTRKNGKVYINGQKTFITGAKEYPYMLVLARDPQPKDPKKAFTLWWVDSSKPGIKINPLHKIGWHMLSTCEVYLDNVEVEESDMVGEEGMGFLNVMYNFEMERLINAARSTGFAECAFEDAARYANQRIAFGKPIGHNQMIQEKLALMAIKIDNMRNMVLKVAWQADQHQSLRTSAALAKLYCARTAMEVIDDAIQIMGGLGYTDEARVSRFWRDVRCERIGGGTDEIMIYVAGRQILKDYQNK.

It belongs to the acyl-CoA dehydrogenase family. The cofactor is FAD.

It catalyses the reaction a 2,3-saturated acyl-CoA + A = a 2,3-dehydroacyl-CoA + AH2. The protein is Probable acyl-CoA dehydrogenase YdiO (ydiO) of Escherichia coli O157:H7.